Here is an 895-residue protein sequence, read N- to C-terminus: La RNA-binding domain-containing protein LHP1 (895 aa).

Disordered stretches follow at residues 24 to 265 (ANGN…PPPS), 285 to 344 (SATS…HDAT), 359 to 590 (GEDK…LGHG), 796 to 857 (PDAA…AQDV), and 870 to 895 (VNGE…NYEQ). A compositionally biased stretch (low complexity) spans 31–75 (SSPSSSSSATPEPTSLSSSTSGKKAFSTATSKSGQQKQGSSPQPG). Residues 95 to 143 (QRTDRSEEKEKRGSSSKNWRERSHRDEKNQDDGEKRNGRERSKKEKGDK) show a composition bias toward basic and acidic residues. Residues 152–170 (SATSSEKTAKSLSSSTKNA) show a composition bias toward low complexity. Composition is skewed to polar residues over residues 172-184 (GVTS…NPIA) and 192-216 (KAQN…STIN). The span at 228-244 (DNWRARPAKVEKNEKTE) shows a compositional bias: basic and acidic residues. Residues 251 to 260 (QAQPQPQRQL) show a composition bias toward low complexity. A compositionally biased stretch (basic and acidic residues) spans 296–314 (KSDKEKSLTNGMVKEEDSG). Low complexity predominate over residues 325–336 (AAAAAAAGTSST). 4 stretches are compositionally biased toward basic and acidic residues: residues 359–371 (GEDK…ERLN), 405–428 (HAAE…REGG), 452–468 (EGKK…DGHA), and 485–495 (GDVKETKEGDA). A compositionally biased stretch (low complexity) spans 496 to 508 (RSASQQESSSHRS). Polar residues predominate over residues 510 to 521 (PSISASANTGID). The span at 563-572 (RGSFGGGRAR) shows a compositional bias: gly residues. One can recognise an HTH La-type RNA-binding domain in the interval 706-796 (VPNLDPLRFY…GAESHRWVLP (91 aa)). Serine 847 is modified (phosphoserine). Over residues 873-884 (EIKEKEEVKAME) the composition is skewed to basic and acidic residues. Residues 885 to 895 (NEGEESENYEQ) are compositionally biased toward acidic residues.

In terms of biological role, may act as an RNA-binding protein. In Cryptococcus neoformans var. grubii serotype A (strain H99 / ATCC 208821 / CBS 10515 / FGSC 9487) (Filobasidiella neoformans var. grubii), this protein is La RNA-binding domain-containing protein LHP1.